We begin with the raw amino-acid sequence, 405 residues long: Cytoplasmic polyadenylated homeobox-like protein (405 aa).

2 disordered regions span residues 1 to 33 and 340 to 363; these read MNLDGTSGGFPAEEDHHNEERQTKNKRKTKHRH and PWDLGKQWSSAQSQLQSQLPQNNG. Residues 13–23 are compositionally biased toward basic and acidic residues; sequence EEDHHNEERQT. The span at 24 to 33 shows a compositional bias: basic residues; the sequence is KNKRKTKHRH. Residues 28–87 constitute a DNA-binding region (homeobox); it reads KTKHRHKFSEELLQELKEIFGENCYPDYTTRKTLAIKFDCPVNVIDNWFQNKRARLPPAE. A compositionally biased stretch (low complexity) spans 346-360; sequence QWSSAQSQLQSQLPQ.

The protein localises to the nucleus. Transcription factor that acts as activator. This chain is Cytoplasmic polyadenylated homeobox-like protein, found in Homo sapiens (Human).